A 230-amino-acid chain; its full sequence is Ureidoacrylate amidohydrolase RutB (230 aa).

Aspartate 24 acts as the Proton acceptor in catalysis. Lysine 133 is a catalytic residue. Cysteine 166 functions as the Nucleophile in the catalytic mechanism.

This sequence belongs to the isochorismatase family. RutB subfamily.

The enzyme catalyses (Z)-3-ureidoacrylate + H2O + H(+) = (Z)-3-aminoacrylate + NH4(+) + CO2. It carries out the reaction (Z)-3-ureidoacrylate + H2O = (Z)-3-aminoacrylate + carbamate + H(+). It catalyses the reaction (Z)-2-methylureidoacrylate + H2O + H(+) = (Z)-2-methylaminoacrylate + NH4(+) + CO2. In terms of biological role, hydrolyzes ureidoacrylate to form aminoacrylate and carbamate. The carbamate hydrolyzes spontaneously, thereby releasing one of the nitrogen atoms of the pyrimidine ring as ammonia and one of its carbon atoms as CO2. The sequence is that of Ureidoacrylate amidohydrolase RutB from Enterobacter sp. (strain 638).